A 1526-amino-acid chain; its full sequence is Myosin type-2 heavy chain 1 (1526 aa).

One can recognise a Myosin N-terminal SH3-like domain in the interval 22–73 (DDKRWVWISDPETAFTKAWIKEDLPDKKYVVRYNNSRDEKIVGEDEIDPVNP). Residues 77 to 755 (DRVNDMAELT…VLAELEERRV (679 aa)) enclose the Myosin motor domain. 170–177 (GESGAGKT) contacts ATP. Actin-binding regions lie at residues 634–656 (LNQL…VPNE) and 734–748 (RIGV…GVLA). The IQ domain maps to 758–787 (LQRLMTMLQTRIRGFLQRKIFQKRLKDIQA). Positions 875–1244 (ALDKEEILRR…SLTKQVNELS (370 aa)) form a coiled coil. S1044 carries the post-translational modification Phosphoserine.

This sequence belongs to the TRAFAC class myosin-kinesin ATPase superfamily. Myosin family. As to quaternary structure, binds to cdc4 and rlc1.

Required for cell division. It is a component of the cdc12 'spot', a structure thought to mark the site of septation. May work in conjunction with myo3. In Schizosaccharomyces pombe (strain 972 / ATCC 24843) (Fission yeast), this protein is Myosin type-2 heavy chain 1 (myo2).